The following is a 315-amino-acid chain: Initiation factor TFIIB homolog (315 aa).

This sequence belongs to the asfivirus C315R family.

Functionally, putative initation factor. This African swine fever virus (strain Badajoz 1971 Vero-adapted) (Ba71V) protein is Initiation factor TFIIB homolog.